The primary structure comprises 387 residues: Oleoyl-12-hydroxylase FAH12 (387 aa).

The disordered stretch occupies residues 1 to 34; the sequence is MGGGGRMSTVITSNNSEKKGGSSHLKRAPHTKPP. A run of 2 helical transmembrane segments spans residues 61–81 and 88–108; these read AYDVCLSFLFYSIATNFFPYI and VAWLVYWLFQGCILTGLWVIG. The Histidine box-1 signature appears at 109-113; that stretch reads HECGH. A helical membrane pass occupies residues 121-141; sequence LADDIVGLIVHSALLVPYFSW. The short motif at 145-149 is the Histidine box-2 element; that stretch reads HRRHH. The next 3 membrane-spanning stretches (helical) occupy residues 183–203, 229–249, and 253–273; these read VLTLAATLLLGWPLYLAFNVS, IYIADLGIFATTFVLYQATMA, and AWVMRIYGVPLLIVNCFLVMI. The Histidine box-3 signature appears at 319–323; that stretch reads HVAHH.

Belongs to the fatty acid desaturase type 1 family. In terms of tissue distribution, expressed in seeds. Barely detected in leaves.

It is found in the microsome membrane. It catalyses the reaction a 1-acyl-2-(9Z)-octadecenoyl-sn-glycero-3-phosphocholine + 2 Fe(II)-[cytochrome b5] + O2 + 2 H(+) = a 1-acyl-2-[(R)-12-hydroxyoleoyl]-sn-glycero-3-phosphocholine + 2 Fe(III)-[cytochrome b5] + H2O. It participates in lipid metabolism; monounsaturated fatty acid biosynthesis. Its activity is regulated as follows. Inhibited by oleoyloxyethyl phosphocholine. Functionally, oleoyl-12-hydroxylase involved in the biosynthesis of ricinoleate (12-hydroxy-cis-9-octadecenoate), the major fatty acid constituent of the oil seeds from castor bean plants. Catalyzes the hydroxylation at the 12-position of 1-acyl-2-oleoyl-sn-glycero-3-phosphocholine (2-oleoyl-PC), which seems to be the actual physiological subtrate. It uses cytochrome b5 as an electron donor. May also be involved in the production of lesquerolic acid (14-hydroxyeicos-cis-ll-enoic acid) in vitro. This is Oleoyl-12-hydroxylase FAH12 from Ricinus communis (Castor bean).